A 536-amino-acid chain; its full sequence is Bicoumarin synthase desC (536 aa).

A helical membrane pass occupies residues 12 to 32 (YVALAGITGFFLVFLGFLVVI). 2 N-linked (GlcNAc...) asparagine glycosylation sites follow: Asn149 and Asn371. Cys480 is a binding site for heme.

It belongs to the cytochrome P450 family. Heme serves as cofactor.

The protein localises to the membrane. The enzyme catalyses 2 7-demethylsiderin + NADPH + O2 = desertorin A + NADP(+) + 2 H2O. It participates in secondary metabolite biosynthesis. In terms of biological role, non-reducing polyketide synthase; part of the gene cluster that mediates the biosynthesis of the bicoumarin desertorin. The non-reducing polyketide synthase desS first catalyzes the formation of the pentaketidic 4,7-dihydroxy-5-methylcoumarin from acetyl coenzyme A and 4 malonyl coenzyme A molecules. Further O-methylation by desB leads to the formation of 7-demethylsiderin. Then, an oxidative phenol coupling catalyzed by the cytochrome P450 monooxygenase desC forms the 6,8'-dimer M-desertorin A via dimerization the monomeric precursor, 7-demethylsiderin. M-desertorin A is further converted to M-desertorin C. This chain is Bicoumarin synthase desC, found in Aspergillus desertorum (Emericella desertorum).